The chain runs to 337 residues: Phenylalanine--tRNA ligase alpha subunit (337 aa).

Glu258 serves as a coordination point for Mg(2+).

This sequence belongs to the class-II aminoacyl-tRNA synthetase family. Phe-tRNA synthetase alpha subunit type 1 subfamily. In terms of assembly, tetramer of two alpha and two beta subunits. Mg(2+) is required as a cofactor.

Its subcellular location is the cytoplasm. The catalysed reaction is tRNA(Phe) + L-phenylalanine + ATP = L-phenylalanyl-tRNA(Phe) + AMP + diphosphate + H(+). This Burkholderia vietnamiensis (strain G4 / LMG 22486) (Burkholderia cepacia (strain R1808)) protein is Phenylalanine--tRNA ligase alpha subunit.